The sequence spans 241 residues: Acetoacetyl-CoA reductase (241 aa).

Residues 12–14 and 82–86 contribute to the NADP(+) site; these read RGI and NAGIT. Substrate is bound by residues Asp-88 and 141–144; that span reads QMGQ. Tyr-147 acts as the Proton acceptor in catalysis. 177–180 is a binding site for NADP(+); sequence PGYI. 178–179 lines the substrate pocket; sequence GY.

Belongs to the short-chain dehydrogenases/reductases (SDR) family.

The protein resides in the cytoplasm. It carries out the reaction a (3R)-3-hydroxyacyl-CoA + NADP(+) = a 3-oxoacyl-CoA + NADPH + H(+). The protein operates within biopolymer metabolism; poly-(R)-3-hydroxybutanoate biosynthesis. This is Acetoacetyl-CoA reductase from Shinella zoogloeoides (Crabtreella saccharophila).